A 298-amino-acid chain; its full sequence is Pyridoxal 5'-phosphate synthase subunit PdxS (298 aa).

Asp24 is a binding site for D-ribose 5-phosphate. Lys81 acts as the Schiff-base intermediate with D-ribose 5-phosphate in catalysis. Gly153 is a binding site for D-ribose 5-phosphate. Arg165 is a D-glyceraldehyde 3-phosphate binding site. D-ribose 5-phosphate-binding positions include Gly214 and 235–236 (GS).

This sequence belongs to the PdxS/SNZ family. In terms of assembly, in the presence of PdxT, forms a dodecamer of heterodimers.

It catalyses the reaction aldehydo-D-ribose 5-phosphate + D-glyceraldehyde 3-phosphate + L-glutamine = pyridoxal 5'-phosphate + L-glutamate + phosphate + 3 H2O + H(+). Its pathway is cofactor biosynthesis; pyridoxal 5'-phosphate biosynthesis. In terms of biological role, catalyzes the formation of pyridoxal 5'-phosphate from ribose 5-phosphate (RBP), glyceraldehyde 3-phosphate (G3P) and ammonia. The ammonia is provided by the PdxT subunit. Can also use ribulose 5-phosphate and dihydroxyacetone phosphate as substrates, resulting from enzyme-catalyzed isomerization of RBP and G3P, respectively. This Halalkalibacterium halodurans (strain ATCC BAA-125 / DSM 18197 / FERM 7344 / JCM 9153 / C-125) (Bacillus halodurans) protein is Pyridoxal 5'-phosphate synthase subunit PdxS.